Reading from the N-terminus, the 253-residue chain is uncharacterized protein (253 aa).

The N-terminal stretch at 1 to 19 (MRYLKRITIYISLLILVSG) is a signal peptide. Cysteine 20 carries N-palmitoyl cysteine lipidation. Cysteine 20 is lipidated: S-diacylglycerol cysteine.

It belongs to the staphylococcal tandem lipoprotein family.

Its subcellular location is the cell membrane. This is an uncharacterized protein from Staphylococcus epidermidis (strain ATCC 12228 / FDA PCI 1200).